Reading from the N-terminus, the 401-residue chain is Probable tRNA sulfurtransferase (401 aa).

The THUMP domain occupies 60-165; sequence EAVMARLKHV…EDATYLTFRD (106 aa). Residues 183 to 184, 208 to 209, R265, G287, and Q296 each bind ATP; these read MI and HF.

It belongs to the ThiI family.

It is found in the cytoplasm. It catalyses the reaction [ThiI sulfur-carrier protein]-S-sulfanyl-L-cysteine + a uridine in tRNA + 2 reduced [2Fe-2S]-[ferredoxin] + ATP + H(+) = [ThiI sulfur-carrier protein]-L-cysteine + a 4-thiouridine in tRNA + 2 oxidized [2Fe-2S]-[ferredoxin] + AMP + diphosphate. It carries out the reaction [ThiS sulfur-carrier protein]-C-terminal Gly-Gly-AMP + S-sulfanyl-L-cysteinyl-[cysteine desulfurase] + AH2 = [ThiS sulfur-carrier protein]-C-terminal-Gly-aminoethanethioate + L-cysteinyl-[cysteine desulfurase] + A + AMP + 2 H(+). It participates in cofactor biosynthesis; thiamine diphosphate biosynthesis. Functionally, catalyzes the ATP-dependent transfer of a sulfur to tRNA to produce 4-thiouridine in position 8 of tRNAs, which functions as a near-UV photosensor. Also catalyzes the transfer of sulfur to the sulfur carrier protein ThiS, forming ThiS-thiocarboxylate. This is a step in the synthesis of thiazole, in the thiamine biosynthesis pathway. The sulfur is donated as persulfide by IscS. The polypeptide is Probable tRNA sulfurtransferase (Bacillus licheniformis (strain ATCC 14580 / DSM 13 / JCM 2505 / CCUG 7422 / NBRC 12200 / NCIMB 9375 / NCTC 10341 / NRRL NRS-1264 / Gibson 46)).